We begin with the raw amino-acid sequence, 425 residues long: Serine--tRNA ligase (425 aa).

Position 231-233 (231-233) interacts with L-serine; that stretch reads TAE. 262–264 contributes to the ATP binding site; that stretch reads RRE. Residue Glu-285 participates in L-serine binding. 349–352 provides a ligand contact to ATP; that stretch reads EISS. L-serine is bound at residue Ser-385.

It belongs to the class-II aminoacyl-tRNA synthetase family. Type-1 seryl-tRNA synthetase subfamily. As to quaternary structure, homodimer. The tRNA molecule binds across the dimer.

Its subcellular location is the cytoplasm. The enzyme catalyses tRNA(Ser) + L-serine + ATP = L-seryl-tRNA(Ser) + AMP + diphosphate + H(+). The catalysed reaction is tRNA(Sec) + L-serine + ATP = L-seryl-tRNA(Sec) + AMP + diphosphate + H(+). It participates in aminoacyl-tRNA biosynthesis; selenocysteinyl-tRNA(Sec) biosynthesis; L-seryl-tRNA(Sec) from L-serine and tRNA(Sec): step 1/1. Catalyzes the attachment of serine to tRNA(Ser). Is also able to aminoacylate tRNA(Sec) with serine, to form the misacylated tRNA L-seryl-tRNA(Sec), which will be further converted into selenocysteinyl-tRNA(Sec). This chain is Serine--tRNA ligase, found in Aquifex aeolicus (strain VF5).